Reading from the N-terminus, the 63-residue chain is ORF6 protein (63 aa).

Residues aspartate 54 to proline 63 are critical for disrupting nuclear import.

Belongs to the coronaviruses accessory protein 6 family. In terms of assembly, may interact with nsp8. Interacts with protein ORF9b. Interacts with host RAE1 in NUP98-RAE1 complex; the interaction disrupts the host nuclear import. Interacts with host KPNA2.

The protein localises to the host endoplasmic reticulum membrane. Its subcellular location is the host Golgi apparatus membrane. The protein resides in the host cytoplasm. Functionally, disrupts bidirectional nucleocytoplasmic transport by interacting with host RAE1-NUP98 complex. Disrupts cell nuclear import complex formation also by tethering karyopherin alpha 2 and karyopherin beta 1 to the membrane. Retention of import factors at the ER/Golgi membrane leads to a loss of transport into the nucleus. Thereby prevents STAT1 nuclear translocation in response to interferon signaling, thus blocking the expression of interferon stimulated genes (ISGs) that display multiple antiviral activities. In Homo sapiens (Human), this protein is ORF6 protein.